Here is a 140-residue protein sequence, read N- to C-terminus: Mercuric transport protein MerC (140 aa).

At 2–10 (GLMTRIADK) the chain is on the cytoplasmic side. The helical transmembrane segment at 11–31 (TGALGSVVSAMGCAACFPALA) threads the bilayer. Gly22 and Ala25 together coordinate Hg(2+). Over 32–46 (SFGAAIGLGFLSQYE) the chain is Periplasmic. Residues 47–67 (GLFISRLLPLFAALAFLANAL) form a helical membrane-spanning segment. Topologically, residues 68-78 (GWFSHRQWLRS) are cytoplasmic. The chain crosses the membrane as a helical span at residues 79 to 99 (LLGMIGPAIVFAATVWLLGNW). The Periplasmic segment spans residues 100–106 (WTANLMY). The chain crosses the membrane as a helical span at residues 107 to 127 (VGLALMIGVSIWDFVSPAHRR). The Cytoplasmic segment spans residues 128 to 140 (CGPDGCELPAKRL).

The protein localises to the cell inner membrane. With respect to regulation, uptake of Hg(2+) is decreased by iodoacetamide and iodoacetate, and is completely inhibited by the thiol-modifying reagent N-ethylmaleimide (NEM). Its function is as follows. Involved in mercuric ion uptake and binding. MerC-mediated Hg(2+) uptake does not require MerP. The chain is Mercuric transport protein MerC from Shigella flexneri.